We begin with the raw amino-acid sequence, 257 residues long: Thiazole synthase (257 aa).

Lys96 acts as the Schiff-base intermediate with DXP in catalysis. 1-deoxy-D-xylulose 5-phosphate contacts are provided by residues Gly157, 184–185, and 206–207; these read AG and NT.

It belongs to the ThiG family. Homotetramer. Forms heterodimers with either ThiH or ThiS.

The protein localises to the cytoplasm. It carries out the reaction [ThiS sulfur-carrier protein]-C-terminal-Gly-aminoethanethioate + 2-iminoacetate + 1-deoxy-D-xylulose 5-phosphate = [ThiS sulfur-carrier protein]-C-terminal Gly-Gly + 2-[(2R,5Z)-2-carboxy-4-methylthiazol-5(2H)-ylidene]ethyl phosphate + 2 H2O + H(+). It participates in cofactor biosynthesis; thiamine diphosphate biosynthesis. Its function is as follows. Catalyzes the rearrangement of 1-deoxy-D-xylulose 5-phosphate (DXP) to produce the thiazole phosphate moiety of thiamine. Sulfur is provided by the thiocarboxylate moiety of the carrier protein ThiS. In vitro, sulfur can be provided by H(2)S. The sequence is that of Thiazole synthase from Bartonella quintana (strain Toulouse) (Rochalimaea quintana).